The primary structure comprises 140 residues: uncharacterized protein (140 aa).

3 consecutive transmembrane segments (helical) span residues 20–42, 88–110, and 115–137; these read ILYY…YVSG, FVAL…PVLL, and IIYT…GLLQ.

Its subcellular location is the cell membrane. This is an uncharacterized protein from Archaeoglobus fulgidus (strain ATCC 49558 / DSM 4304 / JCM 9628 / NBRC 100126 / VC-16).